Consider the following 1464-residue polypeptide: MSNSLGNNLLYQGFLTSTVLEHKSRISPPCVGGNSLFQQQVISKSPLSTEFRGNRLKVQKKKIPMEKKRAFSSSPHAVLTTDTSSELAEKFSLGGNIELQVDVRPPTSGDVSFVDFQVTNGSDKLFLHWGAVKFGKETWSLPNDRPDGTKVYKNKALRTPFVKSGSNSILRLEIRDTAIEAIEFLIYDEAHDKWIKNNGGNFRVKLSRKEIRGPDVSVPEELVQIQSYLRWERKGKQNYPPEKEKEEYEAARTVLQEEIARGASIQDIRARLTKTNDKSQSKEEPLHVTKSDIPDDLAQAQAYIRWEKAGKPNYPPEKQIEELEEARRELQLELEKGITLDELRKTITKGEIKTKVEKHLKRSSFAVERIQRKKRDFGHLINKYTSSPAVQVQKVLEEPPALSKIKLYAKEKEEQIDDPILNKKIFKVDDGELLVLVAKSSGKTKVHLATDLNQPITLHWALSKSPGEWMVPPSSILPPGSIILDKAAETPFSASSSDGLTSKVQSLDIVIEDGNFVGMPFVLLSGEKWIKNQGSDFYVGFSAASKLALKAAGDGSGTAKSLLDKIADMESEAQKSFMHRFNIAADLIEDATSAGELGFAGILVWMRFMATRQLIWNKNYNVKPREISKAQDRLTDLLQNAFTSHPQYREILRMIMSTVGRGGEGDVGQRIRDEILVIQRNNDCKGGMMQEWHQKLHNNTSPDDVVICQALIDYIKSDFDLGVYWKTLNENGITKERLLSYDRAIHSEPNFRGDQKGGLLRDLGHYMRTLKAVHSGADLESAIANCMGYKTEGEGFMVGVQINPVSGLPSGFQDLLHFVLDHVEDKNVETLLERLLEAREELRPLLLKPNNRLKDLLFLDIALDSTVRTAVERGYEELNNANPEKIMYFISLVLENLALSVDDNEDLVYCLKGWNQALSMSNGGDNHWALFAKAVLDRTRLALASKAEWYHHLLQPSAEYLGSILGVDQWALNIFTEEIIRAGSAASLSSLLNRLDPVLRKTANLGSWQIISPVEAVGYVVVVDELLSVQNEIYEKPTILVAKSVKGEEEIPDGAVALITPDMPDVLSHVSVRARNGKVCFATCFDPNILADLQAKEGRILLLKPTPSDIIYSEVNEIELQSSSNLVEAETSATLRLVKKQFGGCYAISADEFTSEMVGAKSRNIAYLKGKVPSSVGIPTSVALPFGVFEKVLSDDINQGVAKELQILMKKLSEGDFSALGEIRTTVLDLSAPAQLVKELKEKMQGSGMPWPGDEGPKRWEQAWMAIKKVWASKWNERAYFSTRKVKLDHDYLCMAVLVQEIINADYAFVIHTTNPSSGDDSEIYAEVVRGLGETLVGAYPGRALSFICKKKDLNSPQVLGYPSKPIGLFIKRSIIFRSDSNGEDLEGYAGAGLYDSVPMDEEEKVVIDYSSDPLITDGNFRQTILSNIARAGHAIEELYGSPQDIEGVVRDGKIYVVQTRPQM.

The transit peptide at 1 to 77 (MSNSLGNNLL…KRAFSSSPHA (77 aa)) directs the protein to the chloroplast. Histidine 1069 acts as the Tele-phosphohistidine intermediate in catalysis.

This sequence belongs to the PEP-utilizing enzyme family. Homodimer. Requires Mg(2+) as cofactor. In terms of tissue distribution, expressed in leaves.

It is found in the plastid. The protein localises to the chloroplast. It catalyses the reaction [(1-&gt;4)-alpha-D-glucosyl](n) + n ATP + n H2O = [(1-&gt;4)-6-phospho-alpha-D-glucosyl](n) + n AMP + n phosphate + 2n H(+). It carries out the reaction ATP + protein L-histidine = ADP + protein N-phospho-L-histidine.. Mediates the incorporation of phosphate into starch-like alpha-glucan, mostly at the C-6 position of glucose units. Acts as an overall regulator of starch mobilization. Required for starch degradation, suggesting that the phosphate content of starch regulates its degradability. More active on alpha-1,6 branched amylopectin. This chain is Alpha-glucan water dikinase, chloroplastic (R1), found in Solanum tuberosum (Potato).